The primary structure comprises 369 residues: Polycomb group protein FERTILIZATION-INDEPENDENT ENDOSPERM (369 aa).

WD repeat units lie at residues 31–73 (EGKK…AISA), 81–123 (DKEE…IHKS), 126–166 (GHGD…CILI), 172–212 (GHRY…TYVE), 238–275 (IHTN…NSPG), 287–328 (VPMC…PVLI), and 335–368 (QSKS…DVIT).

This sequence belongs to the WD repeat ESC family. In terms of assembly, interacts directly with MEA. These two proteins are probably indirectly associated with FIS2. In plants, PcG complexes are probably composed of a member of the EZ family (CLF or MEA), FIE, and a member of the VEFS family (FIS2, VRN2 or EMF2). Component of the plant homeodomain / polycomb repressive complex 2 (PHD-PRC2) large complex during prolonged cold, composed of core PRC2 components (VRN2, EZA1, FIE and MSI1), and three related PHD finger proteins (VIL1, VIL2 and VIN3) that mediates histone H3 trimethylation on 'Lys-27' (H3K27me3). Binds to ALP1. In terms of tissue distribution, expressed in cauline leaves, root and stems. In the male reproductive organ, it is expressed in the developing anther; and is abundant in microspore mother cells, in microsporocytes and in the tapetum, but is absent from vascular bundles, the connective tissue and the filament. It is also absent from pollen grains at subsequent developmental stages. In the developing female reproductive organs, it is highly expressed in all cells of the young ovules primordium before archesporial differentiation. Then, it is highly expressed in the ovule sporophytic tissue and the megaspore mother cell before meiosis, but is absent from placenta or the developing carpel. Then, it decreases.

The protein resides in the nucleus. In terms of biological role, polycomb group (PcG) protein. PcG proteins act by forming multiprotein complexes, which are required to maintain the transcriptionally repressive state of homeotic genes throughout development. PcG proteins are not required to initiate repression, but to maintain it during later stages of development. They probably act via the methylation of histones, rendering chromatin heritably changed in its expressibility. Required to prevent the proliferation of the central cell by repressing unknown target genes before fertilization. Probably also involved in floral repression mechanism established during early plant development. Regulates the anteroposterior organization of the endosperm. Interacts with the promoter and represses the transcription of genes such as PHE1, that are paternally active and maternally silenced. The sequence is that of Polycomb group protein FERTILIZATION-INDEPENDENT ENDOSPERM (FIE) from Arabidopsis thaliana (Mouse-ear cress).